The sequence spans 883 residues: Glutamate receptor 2 (883 aa).

Positions 1–24 are cleaved as a signal peptide; sequence MQKIMHISVLLSPVLWGLIFGVSS. Over 25 to 543 the chain is Extracellular; that stretch reads NSIQIGGLFP…GVFSFLDPLA (519 aa). C78 and C330 are joined by a disulfide. N-linked (GlcNAc...) asparagine glycosylation is found at N256, N370, N406, and N413. 3 residues coordinate L-glutamate: P499, T501, and R506. Residues 544–564 form a helical membrane-spanning segment; it reads YEIWMCIVFAYIGVSVVLFLV. Residues 565–591 are Cytoplasmic-facing; the sequence is SRFSPYEWHTEEFEDGRETQSSESTNE. Residues 592–607 constitute an intramembrane region (helical; Pore-forming); sequence FGIFNSLWFSLGAFMQ. An intramembrane segment occupies 608–610; that stretch reads QGC. Residue C610 is the site of S-palmitoyl cysteine attachment. At 611–616 the chain is on the cytoplasmic side; the sequence is DISPRS. A helical transmembrane segment spans residues 617–637; that stretch reads LSGRIVGGVWWFFTLIIISSY. The Extracellular segment spans residues 638–812; it reads TANLAAFLTV…EKTSALSLSN (175 aa). L-glutamate is bound by residues S675 and T676. The residue at position 683 (S683) is a Phosphoserine; by PKC. S717 is subject to Phosphoserine; by PKG. Residue E726 participates in L-glutamate binding. C739 and C794 form a disulfide bridge. Residues 813–833 form a helical membrane-spanning segment; that stretch reads VAGVFYILVGGLGLAMLVALI. The Cytoplasmic portion of the chain corresponds to 834–883; that stretch reads EFCYKSRAEAKRMKVAKNAQNINPSSSQNSQNFATYKEGYNVYGIESVKI. A lipid anchor (S-palmitoyl cysteine) is attached at C836. Residues S860 and S863 each carry the phosphoserine modification. The required for interaction with IQSEC1 stretch occupies residues 867 to 877; the sequence is ATYKEGYNVYG. Position 876 is a phosphotyrosine (Y876). The residue at position 880 (S880) is a Phosphoserine.

It belongs to the glutamate-gated ion channel (TC 1.A.10.1) family. GRIA2 subfamily. Homotetramer or heterotetramer of pore-forming glutamate receptor subunits. Tetramers may be formed by the dimerization of dimers. May interact with MPP4. Forms a ternary complex with GRIP1 and CSPG4. Interacts with ATAD1 in an ATP-dependent manner. ATAD1-catalyzed ATP hydrolysis disrupts binding to ATAD1 and to GRIP1 and leads to AMPAR complex disassembly. Interacts with GRIP1 and GRIP2. Interacts with NSF via its C-terminus. Isoform 1, but not isoform 3, interacts with PICK1. Interacts with CACNG2. Interacts with GRIA1 and SYNDIG1. Part of a complex containing GRIA2, NSF and NAPA and/or NAPB. Interacts with SNX27 (via PDZ domain); the interaction is required for recycling to the plasma membrane when endocytosed and prevent degradation in lysosomes. Interacts with LRFN1. Found in a complex with GRIA1, GRIA3, GRIA4, CNIH2, CNIH3, CACNG2, CACNG3, CACNG4, CACNG5, CACNG7 and CACNG8. Interacts with CACNG5. Interacts with OLFM2. Interacts with AP4B1, AP4E1 and AP4M1; probably indirect it mediates the somatodendritic localization of GRIA2 in neurons. Forms a complex with GRIP1, NSG1 and STX12; controls the intracellular fate of AMPAR and the endosomal sorting of the GRIA2 subunit toward recycling and membrane targeting. Interacts with IQSEC1; the interaction is required for ARF6 activation. Interacts (heterotetramer form) with CNIH2 and CNIH3; this interaction promotes expression at the plasma membrane and extensively modulates their gating properties by slowing deactivation and desensitization kinetics. In terms of processing, palmitoylated. Depalmitoylated upon L-glutamate stimulation. Cys-610 palmitoylation leads to Golgi retention and decreased cell surface expression. In contrast, Cys-836 palmitoylation does not affect cell surface expression but regulates stimulation-dependent endocytosis. Ubiquitinated by RNF167, leading to its degradation. Post-translationally, phosphorylation at Tyr-876 is required for interaction with IQSEC1 and ARF6 activation, which in turn triggers AMPAR internalization for persistent synaptic depression. In terms of processing, N-glycosylated.

It is found in the cell membrane. Its subcellular location is the postsynaptic cell membrane. The protein resides in the postsynaptic density membrane. It catalyses the reaction Ca(2+)(in) = Ca(2+)(out). It carries out the reaction Na(+)(in) = Na(+)(out). Functionally, ionotropic glutamate receptor that functions as a ligand-gated cation channel, gated by L-glutamate and glutamatergic agonists such as alpha-amino-3-hydroxy-5-methyl-4-isoxazolepropionic acid (AMPA), quisqualic acid, and kainic acid. L-glutamate acts as an excitatory neurotransmitter at many synapses in the central nervous system and plays an important role in fast excitatory synaptic transmission. Binding of the excitatory neurotransmitter L-glutamate induces a conformation change, leading to the opening of the cation channel, and thereby converts the chemical signal to an electrical impulse upon entry of monovalent and divalent cations such as sodium and calcium. The receptor then desensitizes rapidly and enters in a transient inactive state, characterized by the presence of bound agonist. In the presence of CACNG4 or CACNG7 or CACNG8, shows resensitization which is characterized by a delayed accumulation of current flux upon continued application of L-glutamate. Through complex formation with NSG1, GRIP1 and STX12 controls the intracellular fate of AMPAR and the endosomal sorting of the GRIA2 subunit toward recycling and membrane targeting. The protein is Glutamate receptor 2 of Homo sapiens (Human).